A 66-amino-acid polypeptide reads, in one-letter code: MANKMKTRKSAKKRYSFTVNGKVKYKKQNLRHILTKKSSKRKRNLRKSGNLSCFEVKRIKTLLPYD.

Belongs to the bacterial ribosomal protein bL35 family.

This Borreliella afzelii (strain PKo) (Borrelia afzelii) protein is Large ribosomal subunit protein bL35.